Consider the following 195-residue polypeptide: HTH-type transcriptional regulator BetI (195 aa).

An HTH tetR-type domain is found at 8–68 (SIRRRQLIDA…ATMRDITSQL (61 aa)). The H-T-H motif DNA-binding region spans 31–50 (TIAQIARRAGVSTGIISHYF).

The protein operates within amine and polyamine biosynthesis; betaine biosynthesis via choline pathway [regulation]. Its function is as follows. Repressor involved in the biosynthesis of the osmoprotectant glycine betaine. It represses transcription of the choline transporter BetT and the genes of BetAB involved in the synthesis of glycine betaine. This chain is HTH-type transcriptional regulator BetI, found in Escherichia coli O8 (strain IAI1).